Consider the following 668-residue polypeptide: Protein-glutamine gamma-glutamyltransferase (668 aa).

Residues 1-6 (MNAIPR) are Cytoplasmic-facing. The chain crosses the membrane as a helical span at residues 7-27 (VALVWLLVAQVLVILPHLAYM). Over 28 to 50 (PLWIAAMWLGCAAWRVQVFRMRA) the chain is Periplasmic. Residues 51-71 (GYPRAWVKLALALLAGAGVWL) traverse the membrane as a helical segment. The Cytoplasmic segment spans residues 72 to 74 (SRG). A helical transmembrane segment spans residues 75-95 (SLVGLDAGAVLLIAAFILKLV). Residues 96 to 103 (EMKTRRDA) are Periplasmic-facing. The next 2 helical transmembrane spans lie at 104–124 (LVLV…DDGF) and 125–145 (LAAL…IGLQ). The Cytoplasmic portion of the chain corresponds to 146–158 (QSAFASRPWPTLR). A helical membrane pass occupies residues 159–179 (LAGGLLLQALPLMLLLFLFFP). Over 180–548 (RLGPLWSLPM…FGGLDPTRLG (369 aa)) the chain is Periplasmic. The active-site Nucleophile is the Cys-404. Active-site residues include His-448 and Asp-464. A helical transmembrane segment spans residues 549–569 (LLLGAAAILSVGLLALFLLKP). Topologically, residues 570 to 668 (WQGRGDLRSR…TRDGRGEEQA (99 aa)) are cytoplasmic.

Belongs to the transglutaminase-like superfamily.

It is found in the cell inner membrane. It carries out the reaction L-glutaminyl-[protein] + L-lysyl-[protein] = [protein]-L-lysyl-N(6)-5-L-glutamyl-[protein] + NH4(+). In terms of biological role, displays transglutaminase activity (TGase) in vitro. Plays a critical role in the viability of P.aeruginosa. Might contribute to an essential function linked to the cell wall. In Pseudomonas aeruginosa (strain ATCC 15692 / DSM 22644 / CIP 104116 / JCM 14847 / LMG 12228 / 1C / PRS 101 / PAO1), this protein is Protein-glutamine gamma-glutamyltransferase (tgpA).